A 492-amino-acid chain; its full sequence is Putative heme-binding protein VNG_2021C (492 aa).

His177 serves as a coordination point for heme. The segment at 253–301 (AGERVPAPEGGADAHGEGERTHHHGDSDHHDGDDGEQHHHSTGDEADDG) is disordered. Basic and acidic residues predominate over residues 264-301 (ADAHGEGERTHHHGDSDHHDGDDGEQHHHSTGDEADDG). An ABM domain is found at 402–490 (GTMGMFYETK…VLADRPRHVF (89 aa)).

In the N-terminal section; belongs to the ChdC family.

The chain is Putative heme-binding protein VNG_2021C from Halobacterium salinarum (strain ATCC 700922 / JCM 11081 / NRC-1) (Halobacterium halobium).